Reading from the N-terminus, the 327-residue chain is Undecaprenyl-phosphate 4-deoxy-4-formamido-L-arabinose transferase (327 aa).

The Cytoplasmic segment spans residues 1-235 (MFDAAPIKKV…TCLTTTPLRL (235 aa)). A helical membrane pass occupies residues 236–256 (LSLLGSVIAIGGFSLSVLLIV). Over 257–269 (LRLALGPQWAAEG) the chain is Periplasmic. A helical membrane pass occupies residues 270-290 (VFMLFAVLFTFIGAQFIGMGL). The Cytoplasmic segment spans residues 291 to 327 (LGEYIGRIYNDVRARPRYFVQQVIYPESTSFTEESHQ).

The protein belongs to the glycosyltransferase 2 family.

The protein resides in the cell inner membrane. It catalyses the reaction UDP-4-deoxy-4-formamido-beta-L-arabinose + di-trans,octa-cis-undecaprenyl phosphate = 4-deoxy-4-formamido-alpha-L-arabinopyranosyl di-trans,octa-cis-undecaprenyl phosphate + UDP. It participates in glycolipid biosynthesis; 4-amino-4-deoxy-alpha-L-arabinose undecaprenyl phosphate biosynthesis; 4-amino-4-deoxy-alpha-L-arabinose undecaprenyl phosphate from UDP-4-deoxy-4-formamido-beta-L-arabinose and undecaprenyl phosphate: step 1/2. It functions in the pathway bacterial outer membrane biogenesis; lipopolysaccharide biosynthesis. Its function is as follows. Catalyzes the transfer of 4-deoxy-4-formamido-L-arabinose from UDP to undecaprenyl phosphate. The modified arabinose is attached to lipid A and is required for resistance to polymyxin and cationic antimicrobial peptides. The sequence is that of Undecaprenyl-phosphate 4-deoxy-4-formamido-L-arabinose transferase from Salmonella newport (strain SL254).